Consider the following 767-residue polypeptide: Two-component response regulator-like PRR73 (767 aa).

The interval 1 to 64 is disordered; that stretch reads MGSACEAGTD…EPQQTDEQKE (64 aa). One can recognise a Response regulatory domain in the interval 82 to 200; that stretch reads RVLLVENDDS…ELKNLWQHVW (119 aa). The segment covering 205-214 has biased composition (low complexity); it reads SSSGSGSESG. Disordered regions lie at residues 205–272, 312–388, 476–546, 646–701, and 727–767; these read SSSG…QSSW, RWLP…NEPT, ASNQ…RGKV, ANYS…SGSG, and NFGK…DEDR. Positions 238–252 are enriched in acidic residues; that stretch reads DNEDDDDNDEDDDDL. Polar residues-rich tracts occupy residues 263 to 272, 343 to 361, and 488 to 497; these read DNGSGTQSSW, RNSS…VNPT, and CSPQDNSSEA. The segment covering 518 to 531 has biased composition (low complexity); the sequence is GSNGSSNNNDMGSS. Over residues 532–543 the composition is skewed to polar residues; the sequence is TKNAITKPSSNR. The segment covering 689–700 has biased composition (gly residues); that stretch reads GAGGGNGSGSGS. A CCT domain is found at 712–754; it reads REAALNKFRQKRKVRNFGKKVRYQSRKRLAEQRPRIRGQFVRQ. The segment covering 727-738 has biased composition (basic residues); it reads NFGKKVRYQSRK.

The protein belongs to the ARR-like family.

The protein localises to the nucleus. In terms of biological role, controls photoperiodic flowering response. Seems to be one of the component of the circadian clock. Expression of several members of the ARR-like family is controlled by circadian rhythm. The particular coordinated sequential expression of PRR73, PRR37, PRR95, PRR59 and PPR1 result to circadian waves that may be at the basis of the endogenous circadian clock. The protein is Two-component response regulator-like PRR73 (PRR73) of Oryza sativa subsp. indica (Rice).